The primary structure comprises 94 residues: Co-chaperonin GroES (94 aa).

This sequence belongs to the GroES chaperonin family. Heptamer of 7 subunits arranged in a ring. Interacts with the chaperonin GroEL.

It is found in the cytoplasm. In terms of biological role, together with the chaperonin GroEL, plays an essential role in assisting protein folding. The GroEL-GroES system forms a nano-cage that allows encapsulation of the non-native substrate proteins and provides a physical environment optimized to promote and accelerate protein folding. GroES binds to the apical surface of the GroEL ring, thereby capping the opening of the GroEL channel. This Lactobacillus acidophilus (strain ATCC 700396 / NCK56 / N2 / NCFM) protein is Co-chaperonin GroES.